The chain runs to 307 residues: Ribosomal RNA small subunit methyltransferase H (307 aa).

Residues 33–35 (GGY), D51, F82, D96, and Q103 each bind S-adenosyl-L-methionine.

The protein belongs to the methyltransferase superfamily. RsmH family.

The protein localises to the cytoplasm. The enzyme catalyses cytidine(1402) in 16S rRNA + S-adenosyl-L-methionine = N(4)-methylcytidine(1402) in 16S rRNA + S-adenosyl-L-homocysteine + H(+). In terms of biological role, specifically methylates the N4 position of cytidine in position 1402 (C1402) of 16S rRNA. This is Ribosomal RNA small subunit methyltransferase H from Rickettsia peacockii (strain Rustic).